The chain runs to 78 residues: Large ribosomal subunit protein eL20 (78 aa).

Belongs to the eukaryotic ribosomal protein eL20 family. As to quaternary structure, part of the 50S ribosomal subunit. Binds 23S rRNA.

The chain is Large ribosomal subunit protein eL20 from Thermococcus sibiricus (strain DSM 12597 / MM 739).